The following is a 300-amino-acid chain: Protoheme IX farnesyltransferase (300 aa).

The next 9 helical transmembrane spans lie at 20–40, 43–63, 94–114, 116–136, 142–162, 173–193, 215–235, 241–261, and 276–296; these read ITKMRLAISVVFSSVAGYFLG, TIDFVTVTLLAIGGYLMVGAS, PVAFTIASAFTVLGLVVLYVI, PKTAMFGAISIFLYVSIYTPL, LSVFVGAFPGAIPFMLGWVAA, LFMIQFFWQFPHFWAIGWWLF, IQIILYTCWTILVSLIPVFGV, LTPVSGIIIFLLGLGMLYYAI, and MFASVSYITLLQIVYVLDKFI.

Belongs to the UbiA prenyltransferase family. Protoheme IX farnesyltransferase subfamily.

The protein localises to the cell membrane. The enzyme catalyses heme b + (2E,6E)-farnesyl diphosphate + H2O = Fe(II)-heme o + diphosphate. It functions in the pathway porphyrin-containing compound metabolism; heme O biosynthesis; heme O from protoheme: step 1/1. In terms of biological role, converts heme B (protoheme IX) to heme O by substitution of the vinyl group on carbon 2 of heme B porphyrin ring with a hydroxyethyl farnesyl side group. This Christiangramia forsetii (strain DSM 17595 / CGMCC 1.15422 / KT0803) (Gramella forsetii) protein is Protoheme IX farnesyltransferase.